We begin with the raw amino-acid sequence, 106 residues long: Apovitellenin-1 (106 aa).

Residues 1-24 (MVQYRALVIAVILLLSTTVPEVHS) form the signal peptide.

The protein belongs to the apovitellenin family. Homodimer; disulfide-linked. As to expression, produced by the liver, secreted into the blood and then sequestred by receptor mediated endocytosis into growing oocytes.

Protein component of the very low density lipoprotein (VLDL) of egg-laying females. Potent lipoprotein lipase inhibitor, preventing the loss of triglycerides from VLDL on their way from the liver to the growing oocytes. The sequence is that of Apovitellenin-1 from Gallus gallus (Chicken).